We begin with the raw amino-acid sequence, 95 residues long: Small ribosomal subunit protein bS16 (95 aa).

This sequence belongs to the bacterial ribosomal protein bS16 family.

The sequence is that of Small ribosomal subunit protein bS16 from Streptococcus pneumoniae (strain CGSP14).